We begin with the raw amino-acid sequence, 244 residues long: L-xylulose reductase (244 aa).

N-acetylmethionine is present on methionine 1. Leucine 11–arginine 39 lines the NADP(+) pocket. Omega-N-methylarginine is present on arginine 21. Serine 136 provides a ligand contact to substrate. The Proton acceptor role is filled by tyrosine 149. Lysine 153 is a catalytic residue.

This sequence belongs to the short-chain dehydrogenases/reductases (SDR) family. As to quaternary structure, homotetramer. In terms of tissue distribution, highly expressed in kidney, liver and epididymis. Expressed at intermediate level in lung. Weakly or not expressed in brain, heart, spleen and testis.

It is found in the membrane. The protein localises to the apical cell membrane. The enzyme catalyses xylitol + NADP(+) = L-xylulose + NADPH + H(+). Its function is as follows. Catalyzes the NADPH-dependent reduction of several pentoses, tetroses, trioses, alpha-dicarbonyl compounds and L-xylulose. Participates in the uronate cycle of glucose metabolism. May play a role in the water absorption and cellular osmoregulation in the proximal renal tubules by producing xylitol, an osmolyte, thereby preventing osmolytic stress from occurring in the renal tubules. This chain is L-xylulose reductase (Dcxr), found in Mus musculus (Mouse).